We begin with the raw amino-acid sequence, 188 residues long: dCTP deaminase (188 aa).

DCTP-binding positions include 111–116, 135–137, glutamine 156, tyrosine 170, and glutamine 180; these read KSTYAR and TLE. The active-site Proton donor/acceptor is the glutamate 137.

Belongs to the dCTP deaminase family. In terms of assembly, homotrimer.

It carries out the reaction dCTP + H2O + H(+) = dUTP + NH4(+). It functions in the pathway pyrimidine metabolism; dUMP biosynthesis; dUMP from dCTP (dUTP route): step 1/2. Catalyzes the deamination of dCTP to dUTP. The chain is dCTP deaminase from Cupriavidus metallidurans (strain ATCC 43123 / DSM 2839 / NBRC 102507 / CH34) (Ralstonia metallidurans).